Consider the following 706-residue polypeptide: Polyribonucleotide nucleotidyltransferase (706 aa).

Mg(2+) is bound by residues D487 and D493. Positions 553–612 (PRLFTMKINQDKIREVIGKGGETIRAITAETGTEINIAEDGTITIAATTQEAGDAAKKRI) constitute a KH domain. Positions 622-692 (GKVYEGTVVK…DRGRVRLSIK (71 aa)) constitute an S1 motif domain.

Belongs to the polyribonucleotide nucleotidyltransferase family. Mg(2+) is required as a cofactor.

It localises to the cytoplasm. The enzyme catalyses RNA(n+1) + phosphate = RNA(n) + a ribonucleoside 5'-diphosphate. Involved in mRNA degradation. Catalyzes the phosphorolysis of single-stranded polyribonucleotides processively in the 3'- to 5'-direction. The chain is Polyribonucleotide nucleotidyltransferase from Neisseria meningitidis serogroup A / serotype 4A (strain DSM 15465 / Z2491).